Here is a 202-residue protein sequence, read N- to C-terminus: uncharacterized protein (202 aa).

In terms of domain architecture, HTH tetR-type spans glutamate 13 to leucine 73. The H-T-H motif DNA-binding region spans glycine 36–phenylalanine 55.

This is an uncharacterized protein from Mycobacterium tuberculosis (strain CDC 1551 / Oshkosh).